Consider the following 1167-residue polypeptide: MEAVVTSSQTVRAEVAELLGIEESALDPDADLIASGLDSIRMMSLSGRWRKQGIDVRFAAMAANPTVAAWTRLVGERTAESPGAATQSGDTAASAGDPDAPFPLAPIQHALWVGRNELTELGGVAAHLYVEFDGAGVDPERLRTAAAALAARHPMLRVDILGDGMQRISDRDLPVKVTDLRHLDVADAEQQLEVIRHAKSHQLLEGEVLELALTLLPDGRTRLHVDLDMQAADAVSYRNFMADLAALYRGAQLPELQYTYRQYRSAFTATPAPTVDEDRRWWTERIPDLPEPPALPLVPRAEQRDPRRGTRRWHFLDTDIRDRLFAAARARGITPAMAFAASYAGTLARWSTSRHFLLNLPMFGREPFHPDVDKLVGDFTSSLMLDVDFTEAHTPAQRARVMQEALHTSAEHATYSGLSVLRDLSRHHGSPSLAPFVFTSALGLGDLFAGDVTDQFGTPVWHISQGPQVLLDAQVTPFDGGLLVNWDVREDAFRPGVIDAMFAYQLAELERLAADDAAWDAADPPAVPPAQRAVRDAVNDTGARRSDDALHDGFFRTAAHTPDATAVIGSTGTLTYAELRERVLAVTGALQVAGIKPGDTVAVMGPKCADQVTALLAIHAAGAVYVPIGADQPADRADSILQTAGVRMALACGDEPPTFLPALTIAEAVRVGSRVHGVTPATVEPDRVAYVLFTSGSTGAPKGVEVTHAAAMNTLEFINDHFGIGPSDRSLALSTLEGDLSVLDVFGMLRAGGSLVVVDEAQRRDPDSWARLIAEHSVTVLHWMPGWLEMLLEVGGALPSVRVVPTGGDWVRTEMVRELRRAAPGVRFAGLGGATETAIHNTICEPGELPREWSAVPFGRPLPNNACRVVAADGADCPDWVPGELWVGGRGIARGYRGRPDLTAERFVVHDGRTWYRTGDLVRYLPDGQIDFVGRADHRVKISGYRIELGEVEAALRRIAGVEAAVAAVLTAPGDGRGEQLAAIVRASSPAVTVDELTRRMAELVPPHMVPSHIALVEAVPFTVGGKIDRRAVTAELTRSMAERANAQAPTYRVPSTALERALADIVSTVLDRDSVGADDDFFELGGDSVLATQAVARIREWLDSPGVMVTDIFAARRVGALARRLVDHESGSDRLEGVAELYLEVADMNSADVASALHSTSAQASR.

Residues 2-78 (EAVVTSSQTV…AWTRLVGERT (77 aa)) enclose the Carrier 1 domain. S39 is modified (O-(pantetheine 4'-phosphoryl)serine). The tract at residues 78 to 100 (TAESPGAATQSGDTAASAGDPDA) is disordered. The segment at 98-390 (PDAPFPLAPI…SSLMLDVDFT (293 aa)) is condensation/cyclization. Residues 575-967 (TYAELRERVL…RIAGVEAAVA (393 aa)) form an adenylation region. Positions 1054 to 1130 (VPSTALERAL…ALARRLVDHE (77 aa)) constitute a Carrier 2 domain. S1089 bears the O-(pantetheine 4'-phosphoryl)serine mark.

This sequence belongs to the ATP-dependent AMP-binding enzyme family. MbtB subfamily. The cofactor is pantetheine 4'-phosphate. 4'-phosphopantetheine is transferred from CoA to a specific serine in each of the two carrier protein domains, leading to their activation from apo to holo forms.

Its pathway is siderophore biosynthesis; mycobactin biosynthesis. Its function is as follows. Involved in the initial steps of the mycobactin biosynthetic pathway. Putatively couples activated salicylic acid with serine or threonine and cyclizes this precursor to the hydroxyphenyloxazoline ring system present in this class of siderophores. This chain is Phenyloxazoline synthase MbtB (mbtB), found in Mycobacterium sp. (strain MCS).